We begin with the raw amino-acid sequence, 151 residues long: Transcription factor ATOH7 (151 aa).

One can recognise a bHLH domain in the interval lysine 39–leucine 91.

The protein resides in the nucleus. Its subcellular location is the perikaryon. The protein localises to the cell projection. It is found in the axon. Transcription factor that binds to DNA at the consensus sequence 5'-CAG[GC]TG-3'. Positively regulates the determination of retinal ganglion cell fate and formation of the optic nerve and retino-hypothalamic tract. Required for retinal circadian rhythm photoentrainment. Plays a role in brainstem auditory signaling and binaural processing. During retinal neurogenesis, activates its own transcription, as well as the transcription of CHRNB3 and BRN3. This is Transcription factor ATOH7 from Gallus gallus (Chicken).